Consider the following 406-residue polypeptide: uncharacterized protein (406 aa).

Transmembrane regions (helical) follow at residues 7 to 27 (LCTNPLIILIGTYMSIKYYLF), 31 to 51 (YFNIQFGLYVTFIISLLYGSV), 65 to 85 (LIFILHVLFVLICFSIKSEII), 92 to 112 (IFYFGFVKTIIISVVIGSFIL), and 191 to 211 (ISLIKMYLYSVIVPYAISSFF). The disordered stretch occupies residues 259–331 (TLNVPISTNN…TGTNNNVVDN (73 aa)). Positions 262 to 291 (VPISTNNTDNLNSVKTNQQFNTPVAKSNTK) are enriched in polar residues. Positions 292-303 (SNRRKKTGKKIR) are enriched in basic residues. Positions 306-318 (NQTTSSNSSNNQS) are enriched in low complexity. Residues 319-330 (PESTGTNNNVVD) are compositionally biased toward polar residues.

It localises to the membrane. This is an uncharacterized protein from Acanthamoeba polyphaga (Amoeba).